The primary structure comprises 314 residues: Carbamate kinase (314 aa).

It belongs to the carbamate kinase family.

Its subcellular location is the cytoplasm. The enzyme catalyses hydrogencarbonate + NH4(+) + ATP = carbamoyl phosphate + ADP + H2O + H(+). It functions in the pathway metabolic intermediate metabolism; carbamoyl phosphate degradation; CO(2) and NH(3) from carbamoyl phosphate: step 1/1. The polypeptide is Carbamate kinase (arcC) (Latilactobacillus sakei (Lactobacillus sakei)).